The primary structure comprises 501 residues: Cytochrome P450 monooxygenase esdpH (501 aa).

The helical transmembrane segment at 5-22 threads the bilayer; sequence RVGILIIGVLATATFWLC. Residue Cys446 participates in heme binding.

The protein belongs to the cytochrome P450 family. It depends on heme as a cofactor.

It localises to the membrane. It participates in secondary metabolite biosynthesis; terpenoid biosynthesis. Cytochrome P450 monooxygenase; part of the cluster that mediates the biosynthesis of shearones, diterpenoid pyrones (DPs) which are structurally diverse meroterpenoids consisting of a diterpene linked by a pyrone, and which may exhibit a range of bioactivities. Whitin the pathway, esdpH takes part in the molecular scaffold modification via the hydroxylation at C-6' and can transform shearone C into shearone E, shearone D into shearone F, and shearone H into shearone I, the latter being the final product of the pathway. The molecular scaffold is commonly biosynthesized by a series of enzymes including the non-reducing polyketide synthase (NR-PKS) esdpA that generates an alpha-pyrone; the prenyltransferase esdpC that attaches a geranylgeranyl pyrophosphate (GGPP) produced by the GGPP synthase (GGPPS) esdpD onto the pyrone unit; the FAD-dependent monooxygenase esdpE that converts an olefin on the diterpene unit into an epoxide; and the terpene cyclase esdpB that catalyzes the cyclization reactions to give the molecular backbone shearone A. In the modification steps, esdpF oxidizes the hydroxy group to a ketone at C-3 and esdpG then attaches hydroxy groups at both C-11 and C-12. After that, esdpI hydroxylates at C-20 and esdpH hydroxylates at C-6'. The ether bridge is generated by nucleophilic attack of the hydroxy group at C-20 to the carbonyl carbon at C-3. EsdpH can also functions prior to esdpI. The different combinations of these modification enzymes lead to the production of diverse shearone derivatives, shearone I being the end product of the pathway. The alpha-ketoglutarate-dependent dioxygenase esdpJ seems not to be involved in this pathway. The sequence is that of Cytochrome P450 monooxygenase esdpH from Penicillium shearii (Eupenicillium shearii).